The chain runs to 70 residues: Large ribosomal subunit protein bL31 (70 aa).

Lys8 bears the N6-acetyllysine mark. Zn(2+) contacts are provided by Cys16, Cys18, Cys37, and Cys40.

It belongs to the bacterial ribosomal protein bL31 family. Type A subfamily. Part of the 50S ribosomal subunit. Zn(2+) serves as cofactor.

In terms of biological role, binds the 23S rRNA. In Escherichia coli O6:K15:H31 (strain 536 / UPEC), this protein is Large ribosomal subunit protein bL31.